We begin with the raw amino-acid sequence, 2609 residues long: Beige protein homolog 1 (2609 aa).

2 disordered regions span residues 1654–1679 (DSKL…APVS) and 1691–1729 (ILPS…KNRT). Positions 1711-1723 (MEDEEDDVDEEDK) are enriched in acidic residues. The 136-residue stretch at 1735 to 1870 (ESGDSIQDVY…NRDSLYQKLV (136 aa)) folds into the BEACH-type PH domain. Residues 1907–2202 (ANALSFSTTH…QVFKKPHPQR (296 aa)) form the BEACH domain. 5 WD repeats span residues 2249-2290 (KDEV…QPVM), 2294-2332 (LHSE…PIKA), 2340-2379 (GHRY…FVSS), 2429-2475 (NSDE…NAKL), and 2507-2546 (ATRQ…SNVH). An FYVE-type zinc finger spans residues 2550-2604 (DNTSELCSLCDSRFSLMEWRSQCRACGNSNVCSDCVSMLKDTNIKTCYECYRQMP).

It is found in the cytoplasm. The protein resides in the membrane. Its function is as follows. May be involved in protein sorting and cell wall formation. The protein is Beige protein homolog 1 (lvs1) of Schizosaccharomyces pombe (strain 972 / ATCC 24843) (Fission yeast).